The chain runs to 299 residues: S-fimbrial protein subunit SfaH (299 aa).

It belongs to the fimbrial protein family.

The protein resides in the fimbrium. Functionally, fimbriae (also called pili), polar filaments radiating from the surface of the bacterium to a length of 0.5-1.5 micrometers and numbering 100-300 per cell, enable bacteria to colonize the epithelium of specific host organs. In terms of biological role, a minor fimbrial subunit. This protein is necessary for full expression of S-specific binding. S-fimbrial adhesins enable pathogenic E.coli causing urinary-tract infections or newborn meningitis to attach to glycoproteins terminating with alpha-sialic acid-(2-3)-beta-Gal. The chain is S-fimbrial protein subunit SfaH (sfaH) from Escherichia coli O6:K15:H31 (strain 536 / UPEC).